Here is a 549-residue protein sequence, read N- to C-terminus: Glucose-6-phosphate isomerase (549 aa).

The active-site Proton donor is Glu353. Active-site residues include His384 and Lys510.

Belongs to the GPI family.

Its subcellular location is the cytoplasm. It catalyses the reaction alpha-D-glucose 6-phosphate = beta-D-fructose 6-phosphate. The protein operates within carbohydrate biosynthesis; gluconeogenesis. It participates in carbohydrate degradation; glycolysis; D-glyceraldehyde 3-phosphate and glycerone phosphate from D-glucose: step 2/4. Its function is as follows. Catalyzes the reversible isomerization of glucose-6-phosphate to fructose-6-phosphate. In Mycolicibacterium smegmatis (strain ATCC 700084 / mc(2)155) (Mycobacterium smegmatis), this protein is Glucose-6-phosphate isomerase.